The following is a 161-amino-acid chain: Large ribosomal subunit protein eL21 (161 aa).

It belongs to the eukaryotic ribosomal protein eL21 family.

This chain is Large ribosomal subunit protein eL21 (RPL21), found in Cyanophora paradoxa.